The chain runs to 473 residues: Pre-mRNA-splicing factor PRP46 (473 aa).

Residues 1-14 are compositionally biased toward polar residues; it reads MSTSLETPSGTSAG. Disordered stretches follow at residues 1–21 and 103–126; these read MSTS…VASG and GPNV…QAVA. WD repeat units follow at residues 180–219, 222–261, 264–303, 306–347, 349–388, 391–429, and 440–473; these read GHMG…LKLS, GHIS…VIRH, GHFS…NIFT, GHTS…NTLT, HKKS…FVNN, GHEA…PFQH, and DAEA…SEQA.

The protein belongs to the WD repeat PRL1/PRL2 family. In terms of assembly, associated with the spliceosome.

The protein localises to the cytoplasm. It localises to the nucleus. In terms of biological role, involved in pre-mRNA splicing and required for cell cycle progression at G2/M. This is Pre-mRNA-splicing factor PRP46 (PRP46) from Cryptococcus neoformans var. neoformans serotype D (strain B-3501A) (Filobasidiella neoformans).